The primary structure comprises 338 residues: Elongation factor Ts, mitochondrial (338 aa).

A mitochondrion-targeting transit peptide spans 1 to 42 (MSPSIAMFTLTPNARALASKTSKMDLIKNLRERTGAPIVDVK).

The protein belongs to the EF-Ts family.

Its subcellular location is the mitochondrion. In terms of biological role, associates with the EF-Tu.GDP complex and induces the exchange of GDP to GTP. It remains bound to the aminoacyl-tRNA.EF-Tu.GTP complex up to the GTP hydrolysis stage on the ribosome. The chain is Elongation factor Ts, mitochondrial from Ostreococcus tauri.